Here is a 906-residue protein sequence, read N- to C-terminus: Cadherin-2 (906 aa).

The first 25 residues, 1–25 (MCRIAGGPRTLLPLLAALLQASLEA), serve as a signal peptide directing secretion. A propeptide spanning residues 26-159 (SGELALCKTG…HSGALQRQKR (134 aa)) is cleaved from the precursor. S96 bears the Phosphoserine mark. Cadherin domains follow at residues 160–267 (DWVI…RPEF), 268–382 (LHQV…PPEF), 383–497 (TAMT…NPYF), 498–603 (APNP…DNAP), and 604–717 (QVLP…RIVG). The Extracellular segment spans residues 160–724 (DWVIPPINLP…IVGAGLGTGT (565 aa)). E170 is a binding site for Ca(2+). N190 carries an N-linked (GlcNAc...) asparagine glycan. The Ca(2+) site is built by D226, E228, D259, M260, N261, D262, and N263. N273 carries an N-linked (GlcNAc...) asparagine glycan. The Ca(2+) site is built by D293, D295, and N301. N325 is a glycosylation site (N-linked (GlcNAc...) asparagine). D353 is a Ca(2+) binding site. N-linked (GlcNAc...) asparagine glycosylation is found at N402, N572, N622, N651, and N692. Residues 725–745 (IIAILLCIIILLILVLMFVVW) traverse the membrane as a helical segment. Residues 746–906 (MKRRDKERQA…LADMYGGGDD (161 aa)) are Cytoplasmic-facing. Low complexity predominate over residues 863-880 (SGSTAGSLSSLNSSSSGG). Residues 863–883 (SGSTAGSLSSLNSSSSGGDQD) are disordered.

Homodimer (via extracellular region). Can also form heterodimers with other cadherins (via extracellular region). Dimerization occurs in trans, i.e. with a cadherin chain from another cell. Interacts with PCDH8; this complex may also include TAOK2. The interaction with PCDH8 may lead to internalization through TAOK2/p38 MAPK pathway. Identified in a complex containing FGFR4, NCAM1, CDH2, PLCG1, FRS2, SRC, SHC1, GAP43 and CTTN. May interact with OBSCN (via protein kinase domain 2). Interacts with FBXO45. Cleaved by MMP24. Ectodomain cleavage leads to the generation of a soluble 90 kDa N-terminal soluble fragment and a 45 kDa membrane-bound C-terminal fragment 1 (CTF1), which is further cleaved by gamma-secretase into a 35 kDa. Cleavage in neural stem cells by MMP24 affects CDH2-mediated anchorage of neural stem cells to ependymocytes in the adult subependymal zone, leading to modulate neural stem cell quiescence. In terms of processing, may be phosphorylated by OBSCN. As to expression, in testis, expressed in Sertoli and germ cells.

The protein localises to the cell membrane. It localises to the sarcolemma. Its subcellular location is the cell junction. It is found in the cell surface. The protein resides in the desmosome. The protein localises to the adherens junction. Its function is as follows. Calcium-dependent cell adhesion protein; preferentially mediates homotypic cell-cell adhesion by dimerization with a CDH2 chain from another cell. Cadherins may thus contribute to the sorting of heterogeneous cell types. Acts as a regulator of neural stem cells quiescence by mediating anchorage of neural stem cells to ependymocytes in the adult subependymal zone: upon cleavage by MMP24, CDH2-mediated anchorage is affected, leading to modulate neural stem cell quiescence. Plays a role in cell-to-cell junction formation between pancreatic beta cells and neural crest stem (NCS) cells, promoting the formation of processes by NCS cells. Required for proper neurite branching. Required for pre- and postsynaptic organization. CDH2 may be involved in neuronal recognition mechanism. In hippocampal neurons, may regulate dendritic spine density. This Rattus norvegicus (Rat) protein is Cadherin-2 (Cdh2).